An 81-amino-acid polypeptide reads, in one-letter code: Conotoxin Im016 (81 aa).

Positions 1–21 (MSTLGMMLLILLLLVPLATFA) are cleaved as a signal peptide. The propeptide occupies 22-31 (DDGPTMRGHR).

The protein belongs to the conotoxin N superfamily. Post-translationally, contains 5 disulfide bonds. As to expression, expressed by the venom duct.

It localises to the secreted. Probable neurotoxin. This chain is Conotoxin Im016, found in Conus imperialis (Imperial cone).